The primary structure comprises 429 residues: MKKVLAIILGGGAGTRLYPLTKQRAKPAVPLAGKYRLIDIPVSNCINSEITHVYVLTQFNSASLNRHIARTYNFSGFSDGFVEVLAAQQTPENPDWFQGTADAVRQYLWLLSDWEVDYYLILSGDHLYRMDYRLFVNRHRDTNADITLSVLPVEEQVASSFGLLQVDHSGRVTAFSEKPQGEALTRMRVDTTDFGLTPAEAAHKPYLASMGIYVFNRQVLIDLLKQSPQSTDFGKEIIPMAATDHNVQTYLFNDYWEDIGTISSFYEANLALTRQPQPPFSFYDEKAPIYTRPRYLPPSKLLDCQVTESIIGEGCILKNCQIQHSVLGVRSRIESGCVIDNALLMGADFYQPFAERDHKIKNNSVPLGIGADTIVRRAIVDKNACIGRNVKIVNKDHVEEANRESEGFYIRNGIVVVLKNAVIPDNTVI.

Residues glycine 162, 177-178 (EK), and serine 209 each bind alpha-D-glucose 1-phosphate.

It belongs to the bacterial/plant glucose-1-phosphate adenylyltransferase family. As to quaternary structure, homotetramer.

It carries out the reaction alpha-D-glucose 1-phosphate + ATP + H(+) = ADP-alpha-D-glucose + diphosphate. It functions in the pathway glycan biosynthesis; glycogen biosynthesis. Functionally, involved in the biosynthesis of ADP-glucose, a building block required for the elongation reactions to produce glycogen. Catalyzes the reaction between ATP and alpha-D-glucose 1-phosphate (G1P) to produce pyrophosphate and ADP-Glc. This Cyanothece sp. (strain PCC 7425 / ATCC 29141) protein is Glucose-1-phosphate adenylyltransferase.